The chain runs to 360 residues: Phospho-N-acetylmuramoyl-pentapeptide-transferase (360 aa).

The next 10 membrane-spanning stretches (helical) occupy residues 27-47 (IVSLLTALFLSLWMGPRLIAW), 72-92 (PTMGGLMILTSITISVLMWAY), 94-114 (SNPYVWCVLFVLVGYGIVGFI), 132-152 (WKYFWQSVIALAVAFTMFAVG), 168-188 (IMPQLGLWYVLLAYFVIVGTS), 199-219 (GLAIMPTVFVAAGLALVAWAT), 235-255 (FAGELVVVCTAIVGAGLGFLW), 263-283 (VFMGDVGSLALGGALGTIAVL), 288-308 (FLLLIMGGVFVVETLSVILQV), and 338-358 (VIVRFWIISLMLVLIGLATLK).

Belongs to the glycosyltransferase 4 family. MraY subfamily. It depends on Mg(2+) as a cofactor.

The protein localises to the cell inner membrane. It carries out the reaction UDP-N-acetyl-alpha-D-muramoyl-L-alanyl-gamma-D-glutamyl-meso-2,6-diaminopimeloyl-D-alanyl-D-alanine + di-trans,octa-cis-undecaprenyl phosphate = di-trans,octa-cis-undecaprenyl diphospho-N-acetyl-alpha-D-muramoyl-L-alanyl-D-glutamyl-meso-2,6-diaminopimeloyl-D-alanyl-D-alanine + UMP. The protein operates within cell wall biogenesis; peptidoglycan biosynthesis. Functionally, catalyzes the initial step of the lipid cycle reactions in the biosynthesis of the cell wall peptidoglycan: transfers peptidoglycan precursor phospho-MurNAc-pentapeptide from UDP-MurNAc-pentapeptide onto the lipid carrier undecaprenyl phosphate, yielding undecaprenyl-pyrophosphoryl-MurNAc-pentapeptide, known as lipid I. This Sodalis glossinidius (strain morsitans) protein is Phospho-N-acetylmuramoyl-pentapeptide-transferase.